A 468-amino-acid chain; its full sequence is ATP synthase subunit beta 2 (468 aa).

145 to 152 lines the ATP pocket; it reads GGAGVGKT.

This sequence belongs to the ATPase alpha/beta chains family. As to quaternary structure, F-type ATPases have 2 components, CF(1) - the catalytic core - and CF(0) - the membrane proton channel. CF(1) has five subunits: alpha(3), beta(3), gamma(1), delta(1), epsilon(1). CF(0) has three main subunits: a(1), b(2) and c(9-12). The alpha and beta chains form an alternating ring which encloses part of the gamma chain. CF(1) is attached to CF(0) by a central stalk formed by the gamma and epsilon chains, while a peripheral stalk is formed by the delta and b chains.

The protein resides in the cell membrane. It catalyses the reaction ATP + H2O + 4 H(+)(in) = ADP + phosphate + 5 H(+)(out). Produces ATP from ADP in the presence of a proton gradient across the membrane. The catalytic sites are hosted primarily by the beta subunits. This is ATP synthase subunit beta 2 from Mycoplasmopsis pulmonis (strain UAB CTIP) (Mycoplasma pulmonis).